The chain runs to 313 residues: Dehydrogenase/reductase SDR family member 1 (313 aa).

Ile-19 contributes to the NAD(+) binding site. Arg-21 carries the omega-N-methylarginine modification. Asp-64 contacts NAD(+). Residue Ser-151 participates in substrate binding. Residues Tyr-163, Lys-167, and Thr-198 each contribute to the NAD(+) site. Tyr-163 (proton acceptor) is an active-site residue.

This sequence belongs to the short-chain dehydrogenases/reductases (SDR) family.

It is found in the endoplasmic reticulum. It catalyses the reaction 17alpha-estradiol + NADP(+) = estrone + NADPH + H(+). It carries out the reaction testosterone + NADP(+) = androst-4-ene-3,17-dione + NADPH + H(+). The enzyme catalyses prostaglandin E1 + NADPH + H(+) = prostaglandin F1 + NADP(+). The catalysed reaction is isatin + NADPH + H(+) = 3-hydroxyindolin-2-one + NADP(+). NADPH-dependent oxidoreductase which catalyzes the reduction of some steroids (estrone, androstene-3,17-dione and cortisone) as well as prostaglandin E1, isatin and xenobiotics in vitro. May have a role in steroid and/or xenobiotic metabolism. The chain is Dehydrogenase/reductase SDR family member 1 from Mus musculus (Mouse).